The following is a 406-amino-acid chain: Endoglucanase 1 (406 aa).

The N-terminal stretch at 1-43 is a signal peptide; sequence MNSKKIGAMIAAAVLSLIVMTPAATRKIVQRQTRNSSTAVENS. Polar residues-rich tracts occupy residues 30–41 and 51–62; these read QRQTRNSSTAVE and ENVPVSQTHTND. Positions 30-62 are disordered; that stretch reads QRQTRNSSTAVENSAADESETENVPVSQTHTND. E210 (proton donor) is an active-site residue. The active-site Nucleophile is the E330.

This sequence belongs to the glycosyl hydrolase 5 (cellulase A) family.

The enzyme catalyses Endohydrolysis of (1-&gt;4)-beta-D-glucosidic linkages in cellulose, lichenin and cereal beta-D-glucans.. This chain is Endoglucanase 1 (Eg I), found in Ruminococcus albus.